Consider the following 101-residue polypeptide: MSQQERLLKVLKAPHISEKATNNAEKSNTIVFKVALDANKVEIANAVAQLFEVKVDSVRTVVVKGKTKRHGAKTGRRSDWKKAYVTLAEGQELDFVEGAAE.

Belongs to the universal ribosomal protein uL23 family. Part of the 50S ribosomal subunit. Contacts protein L29, and trigger factor when it is bound to the ribosome.

One of the early assembly proteins it binds 23S rRNA. One of the proteins that surrounds the polypeptide exit tunnel on the outside of the ribosome. Forms the main docking site for trigger factor binding to the ribosome. In Mannheimia succiniciproducens (strain KCTC 0769BP / MBEL55E), this protein is Large ribosomal subunit protein uL23.